Here is a 238-residue protein sequence, read N- to C-terminus: MSTPAYKRILLKLSGEALMGDDSYGINRATISRIVEEIKEVVDLGVEVAVVIGGGNIFRGVAPAAEGMDRATADYMGMLATVMNALALQDAMRHIGLVSRVQSALNIEQVAEPYIRGKAIRYLEEGRVVIFGAGTGNPFFTTDTAAALRGMEINAEIVLKATKVDGVYTDDPKRNPEAMRYKTLTFDEAIVKNLKVMDATALTLCRDQKLPISVFSIFRQGALKRVVLGEDEGTRVLP.

12 to 15 serves as a coordination point for ATP; sequence KLSG. Gly-54 contributes to the UMP binding site. Residues Gly-55 and Arg-59 each contribute to the ATP site. UMP-binding positions include Asp-74 and 135–142; that span reads TGNPFFTT. Thr-162, Tyr-168, and Asp-171 together coordinate ATP.

Belongs to the UMP kinase family. As to quaternary structure, homohexamer.

It is found in the cytoplasm. The enzyme catalyses UMP + ATP = UDP + ADP. It functions in the pathway pyrimidine metabolism; CTP biosynthesis via de novo pathway; UDP from UMP (UMPK route): step 1/1. With respect to regulation, inhibited by UTP. Its function is as follows. Catalyzes the reversible phosphorylation of UMP to UDP. The sequence is that of Uridylate kinase from Methylobacillus flagellatus (strain ATCC 51484 / DSM 6875 / VKM B-1610 / KT).